The primary structure comprises 284 residues: N-acylphosphatidylethanolamine synthase (284 aa).

A helical membrane pass occupies residues 21–37 (TVIMAVSAFAKAVANLC). The HXXXXD motif signature appears at 67 to 72 (HMSTLD). A hydrophilic region spans residues 122-163 (GGGIYQENMNEALQRLKDGSWLHTFPEGKVFQDDVPIRRLKW).

The protein belongs to the taffazin family. As to expression, essentially present in young tissues. Expressed in roots, cotyledons, leaves, and shoot and root apical meristems.

It localises to the cell membrane. Acyltransferase that catalyzes the N-acylation of phosphatidylethanolamine to form N-acylphosphatidylethanolamine (N-acyl-PE) (e.g. NAPEs containing C16:0, C16:1, C18:0, and C18:1). Also mediates the formation of acylphosphatidylglycerol (acyl-PG) from lysoglycerophospholipid by O-acylation. Uses acyl-CoA as acyl donors. Acylates 1-acyllysophosphatidylethanolamine (1-acyllyso-PE) and 1-acyllysophosphatidylglycerol (1-acyllyso-PG) at the sn-2-position. This Arabidopsis thaliana (Mouse-ear cress) protein is N-acylphosphatidylethanolamine synthase.